Reading from the N-terminus, the 775-residue chain is 5-methyltetrahydropteroyltriglutamate--homocysteine methyltransferase (775 aa).

5-methyltetrahydropteroyltri-L-glutamate contacts are provided by residues 16–19 (REMK) and Lys115. L-homocysteine-binding positions include 435–437 (IGS) and Glu488. L-methionine is bound by residues 435–437 (IGS) and Glu488. 5-methyltetrahydropteroyltri-L-glutamate-binding positions include 519–520 (RC) and Trp565. Asp603 serves as a coordination point for L-homocysteine. Residue Asp603 coordinates L-methionine. Glu609 contacts 5-methyltetrahydropteroyltri-L-glutamate. Residues His645, Cys647, and Glu669 each contribute to the Zn(2+) site. His698 functions as the Proton donor in the catalytic mechanism. Cys730 contributes to the Zn(2+) binding site.

The protein belongs to the vitamin-B12 independent methionine synthase family. The cofactor is Zn(2+).

The catalysed reaction is 5-methyltetrahydropteroyltri-L-glutamate + L-homocysteine = tetrahydropteroyltri-L-glutamate + L-methionine. It functions in the pathway amino-acid biosynthesis; L-methionine biosynthesis via de novo pathway; L-methionine from L-homocysteine (MetE route): step 1/1. In terms of biological role, catalyzes the transfer of a methyl group from 5-methyltetrahydrofolate to homocysteine resulting in methionine formation. This Coxiella burnetii (strain CbuK_Q154) (Coxiella burnetii (strain Q154)) protein is 5-methyltetrahydropteroyltriglutamate--homocysteine methyltransferase.